Consider the following 465-residue polypeptide: Cysteine--tRNA ligase (465 aa).

Zn(2+) is bound at residue cysteine 27. Positions 29–39 match the 'HIGH' region motif; that stretch reads PTVYDEVHIGH. Zn(2+) contacts are provided by cysteine 204, histidine 229, and glutamate 233. The 'KMSKS' region motif lies at 261 to 265; that stretch reads KMSKS. Residue lysine 264 coordinates ATP.

Belongs to the class-I aminoacyl-tRNA synthetase family. It depends on Zn(2+) as a cofactor.

The protein localises to the cytoplasm. The enzyme catalyses tRNA(Cys) + L-cysteine + ATP = L-cysteinyl-tRNA(Cys) + AMP + diphosphate. This is Cysteine--tRNA ligase from Metallosphaera sedula (strain ATCC 51363 / DSM 5348 / JCM 9185 / NBRC 15509 / TH2).